Reading from the N-terminus, the 464-residue chain is Peptidase inhibitor 16 (464 aa).

The signal sequence occupies residues 1-27 (MHGSGSLLACLLPPLLLLGAAPGPAGA). The 129-residue stretch at 37 to 165 (VELHNLYRTQ…TNIHLLVCNY (129 aa)) folds into the SCP domain. N-linked (GlcNAc...) asparagine glycosylation occurs at Asn114. 4 disordered regions span residues 208-241 (DLSS…TEPP), 260-281 (VETK…TKTP), 304-347 (PATL…LMGT), and 386-412 (TTLK…ANAV). The segment covering 311–325 (STHDPIPKSADKEAS) has biased composition (basic and acidic residues). Over residues 395–411 (SSKSLSNSPSASATANA) the composition is skewed to low complexity.

This sequence belongs to the CRISP family. As to quaternary structure, interacts with PSP94/MSMB. In terms of processing, N-glycosylated.

The protein resides in the secreted. Its function is as follows. May inhibit cardiomyocyte growth. This chain is Peptidase inhibitor 16 (PI16), found in Bos taurus (Bovine).